Here is a 177-residue protein sequence, read N- to C-terminus: Bifunctional protein PyrR (177 aa).

Positions 99-111 (LVLIDDVIYKGRT) match the PRPP-binding motif.

Belongs to the purine/pyrimidine phosphoribosyltransferase family. PyrR subfamily.

It catalyses the reaction UMP + diphosphate = 5-phospho-alpha-D-ribose 1-diphosphate + uracil. Regulates the transcription of the pyrimidine nucleotide (pyr) operon in response to exogenous pyrimidines. Functionally, also displays a weak uracil phosphoribosyltransferase activity which is not physiologically significant. The polypeptide is Bifunctional protein PyrR (Picosynechococcus sp. (strain ATCC 27264 / PCC 7002 / PR-6) (Agmenellum quadruplicatum)).